A 193-amino-acid chain; its full sequence is dCTP deaminase, dUMP-forming (193 aa).

DCTP is bound by residues 101–106, D119, 127–129, Q148, Y162, and Q174; these read KSSLGR and TLE. The Proton donor/acceptor role is filled by E129.

It belongs to the dCTP deaminase family. In terms of assembly, homotrimer.

It catalyses the reaction dCTP + 2 H2O = dUMP + NH4(+) + diphosphate. It participates in pyrimidine metabolism; dUMP biosynthesis; dUMP from dCTP: step 1/1. Bifunctional enzyme that catalyzes both the deamination of dCTP to dUTP and the hydrolysis of dUTP to dUMP without releasing the toxic dUTP intermediate. This Bifidobacterium adolescentis (strain ATCC 15703 / DSM 20083 / NCTC 11814 / E194a) protein is dCTP deaminase, dUMP-forming.